The primary structure comprises 193 residues: dCTP deaminase (193 aa).

Residues 110–115 (RSSLAR), aspartate 128, 136–138 (VLE), tyrosine 171, lysine 178, and glutamine 182 contribute to the dCTP site. The active-site Proton donor/acceptor is the glutamate 138. The tract at residues 169–193 (RPYNRRQDAKYKDQQGAVASRIDKD) is disordered.

Belongs to the dCTP deaminase family. In terms of assembly, homotrimer.

It catalyses the reaction dCTP + H2O + H(+) = dUTP + NH4(+). Its pathway is pyrimidine metabolism; dUMP biosynthesis; dUMP from dCTP (dUTP route): step 1/2. Functionally, catalyzes the deamination of dCTP to dUTP. The chain is dCTP deaminase from Pectobacterium atrosepticum (strain SCRI 1043 / ATCC BAA-672) (Erwinia carotovora subsp. atroseptica).